A 348-amino-acid polypeptide reads, in one-letter code: Dihydroorotase (348 aa).

Positions 14 and 16 each coordinate Zn(2+). Substrate-binding positions include 16–18 and N42; that span reads HLR. Zn(2+) is bound by residues K100, H137, and H175. K100 bears the N6-carboxylysine mark. H137 is a binding site for substrate. Residue L220 participates in substrate binding. D248 lines the Zn(2+) pocket. The active site involves D248. Substrate contacts are provided by H252 and A264.

This sequence belongs to the metallo-dependent hydrolases superfamily. DHOase family. Class II DHOase subfamily. In terms of assembly, homodimer. Zn(2+) is required as a cofactor.

The catalysed reaction is (S)-dihydroorotate + H2O = N-carbamoyl-L-aspartate + H(+). The protein operates within pyrimidine metabolism; UMP biosynthesis via de novo pathway; (S)-dihydroorotate from bicarbonate: step 3/3. Its function is as follows. Catalyzes the reversible cyclization of carbamoyl aspartate to dihydroorotate. This is Dihydroorotase from Pseudomonas aeruginosa (strain LESB58).